The chain runs to 235 residues: N-alpha-acetyltransferase 10 (235 aa).

M1 is subject to N-acetylmethionine. An interaction with NAA15 region spans residues 1–58; sequence MNIRNARPEDLMNMQHCNLLCLPENYQMKYYFYHGLSWPQLSYIAEDENGKIVGYVLA. One can recognise an N-acetyltransferase domain in the interval 1–152; the sequence is MNIRNARPED…DAYAMKRDLT (152 aa). Residue K136 is modified to N6-acetyllysine; by autocatalysis. A disordered region spans residues 178-235; sequence NKVESKGNSPPSSGEACREEKGLAAEDSGGDSKDLSEVSETTESTDVKDSSEASDSAS. Residues S182, S186, and S205 each carry the phosphoserine modification. Residues 193–213 are compositionally biased toward basic and acidic residues; that stretch reads ACREEKGLAAEDSGGDSKDLS. The residue at position 209 (S209) is a Phosphoserine; by IKKB. A phosphoserine mark is found at S213 and S216.

This sequence belongs to the acetyltransferase family. ARD1 subfamily. Component of the N-terminal acetyltransferase A complex (also called the NatA complex) composed of NAA10 and NAA15. Within the complex interacts with NAA15. Component of the N-terminal acetyltransferase A (NatA)/HYPK complex at least composed of NAA10, NAA15 and HYPK, which has N-terminal acetyltransferase activity. In complex with NAA15, interacts with HYPK. Component of the N-terminal acetyltransferase E (NatE) complex at least composed of NAA10, NAA15 and NAA50. Within the complex interacts with NAA15; the interaction is required for binding to NAAT50. Interacts with NAAT50. The interaction of the NatA complex with NAA50 reduces the acetylation activity of the NatA complex. Component of the N-terminal acetyltransferase E (NatE)/HYPK complex at least composed of NAA10, NAA15, NAA50 and HYPK. In complex with NAA15, interacts with HYPK; the interaction with HYPK reduces the capacity of the NatA complex to interact with NAA50. Interacts with HIF1A (via its ODD domain); the interaction increases HIF1A protein stability during normoxia, an down-regulates it when induced by hypoxia. Interacts with the ribosome. Binds to MYLK. Interacts with NAA16. Interacts (via its C-terminal domain) with TSC2, leading to its acetylation. Interacts with IKBKB. Interacts with HSPA1A and HSPA1B leading to its acetylation. Post-translationally, cleaved by caspases during apoptosis. Phosphorylation by IKBKB/IKKB at Ser-209 promotes its proteasome-mediated degradation. In terms of processing, autoacetylated at Lys-136 which stimulates its catalytic activity. Ubiquitous.

It is found in the cytoplasm. The protein resides in the nucleus. The enzyme catalyses N-terminal glycyl-[protein] + acetyl-CoA = N-terminal N(alpha)-acetylglycyl-[protein] + CoA + H(+). It carries out the reaction N-terminal L-alanyl-[protein] + acetyl-CoA = N-terminal N(alpha)-acetyl-L-alanyl-[protein] + CoA + H(+). It catalyses the reaction N-terminal L-seryl-[protein] + acetyl-CoA = N-terminal N(alpha)-acetyl-L-seryl-[protein] + CoA + H(+). The catalysed reaction is N-terminal L-valyl-[protein] + acetyl-CoA = N-terminal N(alpha)-acetyl-L-valyl-[protein] + CoA + H(+). The enzyme catalyses N-terminal L-cysteinyl-[protein] + acetyl-CoA = N-terminal N(alpha)-acetyl-L-cysteinyl-[protein] + CoA + H(+). It carries out the reaction N-terminal L-threonyl-[protein] + acetyl-CoA = N-terminal N(alpha)-acetyl-L-threonyl-[protein] + CoA + H(+). Its function is as follows. Catalytic subunit of N-terminal acetyltransferase complexes which display alpha (N-terminal) acetyltransferase activity. Acetylates amino termini that are devoid of initiator methionine. The alpha (N-terminal) acetyltransferase activity may be important for vascular, hematopoietic and neuronal growth and development. Without NAA15, displays epsilon (internal) acetyltransferase activity towards HIF1A, thereby promoting its degradation. Represses MYLK kinase activity by acetylation, and thus represses tumor cell migration. Acetylates, and stabilizes TSC2, thereby repressing mTOR activity and suppressing cancer development. Acetylates HSPA1A and HSPA1B at 'Lys-77' which enhances its chaperone activity and leads to preferential binding to co-chaperone HOPX. Acetylates HIST1H4A. Acts as a negative regulator of sister chromatid cohesion during mitosis. In Homo sapiens (Human), this protein is N-alpha-acetyltransferase 10 (NAA10).